We begin with the raw amino-acid sequence, 336 residues long: MPTSVSLREDDPLLKDLSEKKQSFRRNVVSLATELKEARTRLAEQERSCSKEAMSRQEAETRVKRMEDEMHELAKELNEKVEQIRASDVATEKFVKELADIKSQLAATHATAEASALSAESAHSHCRVLSKQLHERTGSLKEHEDQVTRLGEQLENLRKELRVRESSQKQLRDELLKVEGDIMRAVSVVKTKENSEVRNMLNEDTPKNSERINKLLTAKDDEIARLRDELKIISAHWRFKTKELEDQVENQRRIDQELKKKVLKLEFCLRETRIQTRKLQKMGERNDVAIQELKEQLAAKKQHEADHSSNQNLWDKSGFKIVVSMSMLILVAFSRR.

Coiled coils occupy residues L14–S87 and V128–K261. The Bipartite nuclear localization signal motif lies at K240–K261. Residues L313–L330 traverse the membrane as a helical segment.

Forms homomers and heteromers with NEAP1 and NEAP2. Interacts with SUN1 and SUN2.

The protein resides in the nucleus inner membrane. It localises to the nucleus. It is found in the nucleoplasm. This is Nuclear envelope-associated protein 3 from Arabidopsis thaliana (Mouse-ear cress).